An 81-amino-acid chain; its full sequence is Exodeoxyribonuclease 7 small subunit (81 aa).

Residues 61–81 are disordered; that stretch reads MNDSDQEVAFETPQGGTGDAD.

The protein belongs to the XseB family. Heterooligomer composed of large and small subunits.

The protein localises to the cytoplasm. It carries out the reaction Exonucleolytic cleavage in either 5'- to 3'- or 3'- to 5'-direction to yield nucleoside 5'-phosphates.. Functionally, bidirectionally degrades single-stranded DNA into large acid-insoluble oligonucleotides, which are then degraded further into small acid-soluble oligonucleotides. This Levilactobacillus brevis (strain ATCC 367 / BCRC 12310 / CIP 105137 / JCM 1170 / LMG 11437 / NCIMB 947 / NCTC 947) (Lactobacillus brevis) protein is Exodeoxyribonuclease 7 small subunit.